Here is an 803-residue protein sequence, read N- to C-terminus: MTDSPFLELWQSRTVAIRERLGIGDQPNDSYCYNSAKNSTVLQGVTFGGIPTVLFIDVSCFLFLIVVFSIIRRKFWDYGRIALVSEGNSESRFRRLSSSSSGQQDFESELGCCSWLTAIFRLHDDQILEWCGEDAIHYLSFQRHIIFLLVVVSCLSLCIILPVNLSGDLLDKDPYSFGRTTIANLQTDNNLLWLHTIFAILYLILTVVFMRHHTQSIKYKEESLVRRTLFVTGLPKDAKKETVESHFRDAYPTCEVVEVQLCYNVAKLIYLCKERKKTEKSLTYYTNLQVKTGQRTFINPKPCGQFCCCEVRGCEWEDAISYYTRMKDRLMERITEEECRVQDQPLGMAFVTFQEKSMATYILKDFNACKCQGLQCKGEPQPSSHSRELGISRWSVTFAAYPEDICWKNLSIQGFRWWFQWLGINFILFVGLFFLTTPSIILSTMDKFNVTKPIHALNDPIISQFFPTLLLWSFSALLPTIVCYSTLLESHWTKSGENRIMMTKVYIFLIFMVLILPSLGLTSLDFFFRWLFDKTSSEASIRLECVFLPDQGAFFVNYVIASAFIGNGMELLRLPGLILYTFRMVMAKTAADRRNVKQHQAFEYEFGAMYAWMLCVFTVIMAYSITCPIIVPFGLIYILLKHMVDRHNLYFAYLPAKLEKRIHFAAVNQALAAPILCLFWLYFFSFLRLGLKAPLTLFTFLVLLLTILVCLAYTCFGCFRHLSPLNYKTEESANDKGNEAGAHVPPPFTPYVPRILNSSSSEKTALSPQQQTYGAINNISGTVAGQGLAQSPEDSVAAADQED.

The Extracellular segment spans residues 1–51 (MTDSPFLELWQSRTVAIRERLGIGDQPNDSYCYNSAKNSTVLQGVTFGGIP). The helical transmembrane segment at 52–74 (TVLFIDVSCFLFLIVVFSIIRRK) threads the bilayer. Over 75–133 (FWDYGRIALVSEGNSESRFRRLSSSSSGQQDFESELGCCSWLTAIFRLHDDQILEWCGE) the chain is Cytoplasmic. The helical transmembrane segment at 134 to 166 (DAIHYLSFQRHIIFLLVVVSCLSLCIILPVNLS) threads the bilayer. Residues 167–190 (GDLLDKDPYSFGRTTIANLQTDNN) are Extracellular-facing. A helical membrane pass occupies residues 191-216 (LLWLHTIFAILYLILTVVFMRHHTQS). At 217 to 415 (IKYKEESLVR…CWKNLSIQGF (199 aa)) the chain is on the cytoplasmic side. Residues 218–413 (KYKEESLVRR…DICWKNLSIQ (196 aa)) are intracellular linker IL2; confers mechanosensitivity. Residues 416 to 443 (RWWFQWLGINFILFVGLFFLTTPSIILS) traverse the membrane as a helical segment. The Extracellular segment spans residues 444 to 461 (TMDKFNVTKPIHALNDPI). The chain crosses the membrane as a helical span at residues 462–489 (ISQFFPTLLLWSFSALLPTIVCYSTLLE). Topologically, residues 490 to 494 (SHWTK) are cytoplasmic. The helical transmembrane segment at 495–531 (SGENRIMMTKVYIFLIFMVLILPSLGLTSLDFFFRWL) threads the bilayer. At 532 to 553 (FDKTSSEASIRLECVFLPDQGA) the chain is on the extracellular side. A helical membrane pass occupies residues 554-585 (FFVNYVIASAFIGNGMELLRLPGLILYTFRMV). Positions 554-585 (FFVNYVIASAFIGNGMELLRLPGLILYTFRMV) are gating helix. Over 586 to 605 (MAKTAADRRNVKQHQAFEYE) the chain is Cytoplasmic. A helical membrane pass occupies residues 606-623 (FGAMYAWMLCVFTVIMAY). Over 624–627 (SITC) the chain is Extracellular. A helical transmembrane segment spans residues 628–650 (PIIVPFGLIYILLKHMVDRHNLY). At 651-660 (FAYLPAKLEK) the chain is on the cytoplasmic side. A helical membrane pass occupies residues 661-688 (RIHFAAVNQALAAPILCLFWLYFFSFLR). The Extracellular portion of the chain corresponds to 689-693 (LGLKA). A helical membrane pass occupies residues 694-708 (PLTLFTFLVLLLTIL). Over 709–803 (VCLAYTCFGC…DSVAAADQED (95 aa)) the chain is Cytoplasmic.

This sequence belongs to the CSC1 (TC 1.A.17) family. (Microbial infection) Interacts with H.contortus GAL-1 (via domain galectin 1).

Its subcellular location is the lysosome membrane. The protein resides in the early endosome membrane. It is found in the cell membrane. The catalysed reaction is Ca(2+)(in) = Ca(2+)(out). Its function is as follows. Mechanosensitive cation channel with low conductance and high activation threshold. In contrast to TMEM63B, does not show phospholipid scramblase activity. Acts as a regulator of lysosomal morphology by mediating lysosomal mechanosensitivity. Important for the baby's first breath and respiration throughout life. Upon lung inflation conducts cation currents in alveolar type 1 and 2 cells triggering lamellar body exocytosis and surfactant secretion into airspace. Also acts as an osmosensitive cation channel preferentially activated by hypotonic stress. In terms of biological role, (Microbial infection) Involved in the immunomodulatory effects exerted by H.contortus GAL-1 on host peripheral blood mononuclear cells to down-regulate host immune response. In Capra hircus (Goat), this protein is Mechanosensitive cation channel TMEM63A (TMEM63A).